The sequence spans 363 residues: Ataxin-3 (363 aa).

One can recognise a Josephin domain in the interval 1–180 (MESIFHERQE…DCEADQLLQM (180 aa)). Cys14 functions as the Nucleophile in the catalytic mechanism. His119 (proton acceptor) is an active-site residue. Residue Asn134 is part of the active site. The span at 192–209 (IGEETAQSRDQRLPRSDV) shows a compositional bias: basic and acidic residues. Residues 192 to 212 (IGEETAQSRDQRLPRSDVDQA) form a disordered region. UIM domains are found at residues 227–246 (EDEE…IDME), 247–266 (DEEA…SRQS), and 337–356 (SEED…ARNH). Over residues 260–290 (MQGSRQSEFSNSLPQNASQPPHTSQTDSLSS) the composition is skewed to polar residues. Residues 260–363 (MQGSRQSEFS…RNHLSTEEKK (104 aa)) form a disordered region. Over residues 353-363 (ARNHLSTEEKK) the composition is skewed to basic and acidic residues.

As to expression, widely expressed.

It localises to the nucleus matrix. The protein localises to the nucleus. It is found in the lysosome membrane. The catalysed reaction is Thiol-dependent hydrolysis of ester, thioester, amide, peptide and isopeptide bonds formed by the C-terminal Gly of ubiquitin (a 76-residue protein attached to proteins as an intracellular targeting signal).. Its function is as follows. Deubiquitinating enzyme involved in protein homeostasis maintenance, transcription, cytoskeleton regulation, myogenesis and degradation of misfolded chaperone substrates. Binds long polyubiquitin chains and trims them, while it has weak or no activity against chains of 4 or less ubiquitins. Involved in degradation of misfolded chaperone substrates via its interaction with STUB1/CHIP: recruited to monoubiquitinated STUB1/CHIP, and restricts the length of ubiquitin chain attached to STUB1/CHIP substrates and preventing further chain extension. Interacts with key regulators of transcription and represses transcription: acts as a histone-binding protein that regulates transcription. Acts as a negative regulator of mTORC1 signaling in response to amino acid deprivation by mediating deubiquitination of RHEB, thereby promoting RHEB inactivation by the TSC-TBC complex. Regulates autophagy via the deubiquitination of 'Lys-402' of BECN1 leading to the stabilization of BECN1. The polypeptide is Ataxin-3 (ATXN3) (Gallus gallus (Chicken)).